A 294-amino-acid chain; its full sequence is Phosphatidylglycerol--prolipoprotein diacylglyceryl transferase (294 aa).

Helical transmembrane passes span 10–30 (VALA…LLAF), 55–75 (LVFY…VLFY), 91–111 (WEGG…MWFF), 119–139 (AFQV…FGRI), 196–216 (PSQL…LWWY), 224–244 (MAAS…IEFF), and 258–278 (WMTK…IMLI). A 1,2-diacyl-sn-glycero-3-phospho-(1'-sn-glycerol) is bound at residue R138.

It belongs to the Lgt family.

The protein localises to the cell inner membrane. The catalysed reaction is L-cysteinyl-[prolipoprotein] + a 1,2-diacyl-sn-glycero-3-phospho-(1'-sn-glycerol) = an S-1,2-diacyl-sn-glyceryl-L-cysteinyl-[prolipoprotein] + sn-glycerol 1-phosphate + H(+). Its pathway is protein modification; lipoprotein biosynthesis (diacylglyceryl transfer). Functionally, catalyzes the transfer of the diacylglyceryl group from phosphatidylglycerol to the sulfhydryl group of the N-terminal cysteine of a prolipoprotein, the first step in the formation of mature lipoproteins. The polypeptide is Phosphatidylglycerol--prolipoprotein diacylglyceryl transferase (Psychrobacter arcticus (strain DSM 17307 / VKM B-2377 / 273-4)).